The following is a 190-amino-acid chain: Dense granule protein 1 (190 aa).

An N-terminal signal peptide occupies residues 1–24; that stretch reads MVRVSAIVGAAASVFVCLSAGAYA. N-linked (GlcNAc...) asparagine glycosylation is present at Asn-30.

Its subcellular location is the secreted. This Toxoplasma gondii protein is Dense granule protein 1 (GRA1).